The chain runs to 141 residues: Cystatin-S (141 aa).

Residues 1-20 form the signal peptide; the sequence is MARPLCTLLLLMATLAGALA. 2 positions are modified to phosphoserine: Ser-21 and Ser-23. Positions 76-80 match the Secondary area of contact motif; the sequence is QTFGG. Intrachain disulfides connect Cys-94/Cys-104 and Cys-118/Cys-138.

This sequence belongs to the cystatin family. Phosphorylated at both its N- and C-terminal regions. Expressed in submandibular and sublingual saliva but not in parotid saliva (at protein level). Expressed in saliva, tears, urine and seminal fluid.

The protein resides in the secreted. This protein strongly inhibits papain and ficin, partially inhibits stem bromelain and bovine cathepsin C, but does not inhibit porcine cathepsin B or clostripain. Papain is inhibited non-competitively. The chain is Cystatin-S (CST4) from Homo sapiens (Human).